The sequence spans 92 residues: UPF0250 protein VC0395_A0469/VC395_0960 (92 aa).

It belongs to the UPF0250 family.

In Vibrio cholerae serotype O1 (strain ATCC 39541 / Classical Ogawa 395 / O395), this protein is UPF0250 protein VC0395_A0469/VC395_0960.